The sequence spans 377 residues: Dihydroorotase, mitochondrial (377 aa).

Residues H44, H46, K130, H168, and H206 each coordinate Zn(2+). K130 carries the post-translational modification N6-carboxylysine. The residue at position 223 (S223) is a Phosphoserine. D280 is a binding site for Zn(2+).

It belongs to the metallo-dependent hydrolases superfamily. DHOase family. Class II DHOase subfamily. The cofactor is Zn(2+).

It localises to the mitochondrion. It carries out the reaction (S)-dihydroorotate + H2O = N-carbamoyl-L-aspartate + H(+). It functions in the pathway pyrimidine metabolism; UMP biosynthesis via de novo pathway; (S)-dihydroorotate from bicarbonate: step 3/3. The sequence is that of Dihydroorotase, mitochondrial (PYR4) from Arabidopsis thaliana (Mouse-ear cress).